Here is a 471-residue protein sequence, read N- to C-terminus: Proline--tRNA ligase (471 aa).

The protein belongs to the class-II aminoacyl-tRNA synthetase family. ProS type 3 subfamily. Homodimer.

It localises to the cytoplasm. The catalysed reaction is tRNA(Pro) + L-proline + ATP = L-prolyl-tRNA(Pro) + AMP + diphosphate. Functionally, catalyzes the attachment of proline to tRNA(Pro) in a two-step reaction: proline is first activated by ATP to form Pro-AMP and then transferred to the acceptor end of tRNA(Pro). This chain is Proline--tRNA ligase, found in Archaeoglobus fulgidus (strain ATCC 49558 / DSM 4304 / JCM 9628 / NBRC 100126 / VC-16).